An 870-amino-acid polypeptide reads, in one-letter code: DNA-directed RNA polymerase subunit Rpo1N (870 aa).

8 residues coordinate Zn(2+): Cys60, Cys63, Cys70, His73, Cys100, Cys103, Cys146, and Cys149. The Mg(2+) site is built by Asp451, Asp453, and Asp455.

The protein belongs to the RNA polymerase beta' chain family. As to quaternary structure, part of the RNA polymerase complex. It depends on Mg(2+) as a cofactor. Zn(2+) is required as a cofactor.

Its subcellular location is the cytoplasm. The enzyme catalyses RNA(n) + a ribonucleoside 5'-triphosphate = RNA(n+1) + diphosphate. In terms of biological role, DNA-dependent RNA polymerase (RNAP) catalyzes the transcription of DNA into RNA using the four ribonucleoside triphosphates as substrates. Forms the clamp head domain. This Methanothermobacter thermautotrophicus (strain ATCC 29096 / DSM 1053 / JCM 10044 / NBRC 100330 / Delta H) (Methanobacterium thermoautotrophicum) protein is DNA-directed RNA polymerase subunit Rpo1N.